The following is a 396-amino-acid chain: S-adenosylmethionine synthase 1 (396 aa).

Position 12 (glutamate 12) interacts with Mg(2+). Position 18 (histidine 18) interacts with ATP. Residue glutamate 46 coordinates K(+). Positions 59 and 102 each coordinate L-methionine. ATP is bound by residues aspartate 170–lysine 172, serine 238–phenylalanine 241, aspartate 249, arginine 255–lysine 256, alanine 272, lysine 276, and lysine 280. An L-methionine-binding site is contributed by aspartate 249. An L-methionine-binding site is contributed by lysine 280.

This sequence belongs to the AdoMet synthase family. In terms of assembly, homotetramer. It depends on Mn(2+) as a cofactor. Mg(2+) serves as cofactor. Co(2+) is required as a cofactor. Requires K(+) as cofactor.

The protein resides in the cytoplasm. The enzyme catalyses L-methionine + ATP + H2O = S-adenosyl-L-methionine + phosphate + diphosphate. The protein operates within amino-acid biosynthesis; S-adenosyl-L-methionine biosynthesis; S-adenosyl-L-methionine from L-methionine: step 1/1. Functionally, catalyzes the formation of S-adenosylmethionine from methionine and ATP. The reaction comprises two steps that are both catalyzed by the same enzyme: formation of S-adenosylmethionine (AdoMet) and triphosphate, and subsequent hydrolysis of the triphosphate. This chain is S-adenosylmethionine synthase 1 (SAM1), found in Oryza sativa subsp. japonica (Rice).